We begin with the raw amino-acid sequence, 151 residues long: MFDVSFTELMVIGVIALVVIGPERLPKVARTIGHLLGRAQRYVNDVKSDIRREIELDELRKFKDEMDETARSMQTSLRETEDTLRDSTQALRAELDDTARDASKAVNGADAPAEPAPAVASDTDTDTDTRSIAPPAAATPADKTPPTGSAT.

The chain crosses the membrane as a helical span at residues 1 to 21 (MFDVSFTELMVIGVIALVVIG). Positions 66 to 151 (MDETARSMQT…DKTPPTGSAT (86 aa)) are disordered. A compositionally biased stretch (basic and acidic residues) spans 93 to 103 (AELDDTARDAS). Low complexity-rich tracts occupy residues 109 to 122 (ADAPAEPAPAVASD) and 133 to 151 (APPAAATPADKTPPTGSAT).

This sequence belongs to the TatB family. In terms of assembly, the Tat system comprises two distinct complexes: a TatABC complex, containing multiple copies of TatA, TatB and TatC subunits, and a separate TatA complex, containing only TatA subunits. Substrates initially bind to the TatABC complex, which probably triggers association of the separate TatA complex to form the active translocon.

Its subcellular location is the cell inner membrane. Part of the twin-arginine translocation (Tat) system that transports large folded proteins containing a characteristic twin-arginine motif in their signal peptide across membranes. Together with TatC, TatB is part of a receptor directly interacting with Tat signal peptides. TatB may form an oligomeric binding site that transiently accommodates folded Tat precursor proteins before their translocation. The sequence is that of Sec-independent protein translocase protein TatB from Bordetella parapertussis (strain 12822 / ATCC BAA-587 / NCTC 13253).